The sequence spans 225 residues: PKHD-type hydroxylase YbiX (225 aa).

The Fe2OG dioxygenase domain maps to 78-177; sequence TLSTPLFNRY…RVASFMWIQS (100 aa). H96, D98, and H158 together coordinate Fe cation. R168 contacts 2-oxoglutarate.

It depends on Fe(2+) as a cofactor. L-ascorbate is required as a cofactor.

The chain is PKHD-type hydroxylase YbiX from Escherichia coli O6:K15:H31 (strain 536 / UPEC).